The chain runs to 410 residues: Structural protein ORF142 (410 aa).

2 disordered regions span residues Met-1–Thr-24 and Pro-156–Ser-197. Acidic residues predominate over residues Asp-161–Ser-188.

Its subcellular location is the virion. This chain is Structural protein ORF142, found in Trichoplusia ni ascovirus 2c (TnAV-2c).